A 568-amino-acid chain; its full sequence is AP2-like ethylene-responsive transcription factor PLT2 (568 aa).

Residues 151 to 171 show a composition bias toward low complexity; that stretch reads ASPAETSADNSSSTTNTSGGA. The segment at 151–173 is disordered; the sequence is ASPAETSADNSSSTTNTSGGAIV. DNA-binding regions (AP2/ERF) lie at residues 190–256 and 292–350; these read IYRG…TNFP and MYRG…TNFE. Positions 548 to 568 are disordered; sequence WNSGESAQGSNPGGVFTMWNE.

It belongs to the AP2/ERF transcription factor family. AP2 subfamily. In terms of processing, stabilized in root meristems by reactive oxygen species (ROS) mediated oxidative post-translational modification triggered by RGF1 hormone peptide in a RITF1-dependent manner. Expressed in roots, seedlings, flowers, and siliques. Also detected at low levels in leaves. In roots, specifically detected in the distal root meristem, including the QC. This tissue specificity is regulated by auxin gradient and depends on PIN proteins.

It localises to the nucleus. Its function is as follows. Probably acts as a transcriptional activator. Binds to the GCC-box pathogenesis-related promoter element. May be involved in the regulation of gene expression by stress factors and by components of stress signal transduction pathways. Master regulator of basal/root fate. Essential for root quiescent center (QC) and columella specification, stem cell activity, as well as for establishment of the stem cell niche during embryogenesis. Modulates the root polar auxin transport by regulating the distribution of PIN genes. Essential role in respecifying pattern and polarity in damaged roots. Direct target of the transcriptional corepressor TPL. Expression levels and patterns regulated post-transcriptionally by root meristem growth factors (RGFs). This is AP2-like ethylene-responsive transcription factor PLT2 from Arabidopsis thaliana (Mouse-ear cress).